The sequence spans 217 residues: MNLVLMGLPGAGKGTQGERIVEDYGIPHISTGDMFRAAMKEETPLGLEAKSYIDKGELVPDEVTIGIVKERLGKDDCERGFLLDGFPRTVAQAEALENILEEYGKPIDYVINIKVDKDSLMERLTGRRICSVCGTTYHLVFNPPKTPGVCDKDGGDLYQRADDNEETVSKRLEVNMKQTQPLLDFYSEKGYLVNVNGQQDINDVYKDVKELLGGLSK.

10 to 15 (GAGKGT) contributes to the ATP binding site. The segment at 30–59 (STGDMFRAAMKEETPLGLEAKSYIDKGELV) is NMP. Residues threonine 31, arginine 36, 57 to 59 (ELV), 85 to 88 (GFPR), and glutamine 92 each bind AMP. The tract at residues 126–163 (GRRICSVCGTTYHLVFNPPKTPGVCDKDGGDLYQRADD) is LID. ATP is bound at residue arginine 127. Zn(2+)-binding residues include cysteine 130 and cysteine 133. 136–137 (TY) contributes to the ATP binding site. The Zn(2+) site is built by cysteine 150 and aspartate 153. Positions 160 and 171 each coordinate AMP. Glutamine 199 lines the ATP pocket.

This sequence belongs to the adenylate kinase family. In terms of assembly, monomer.

The protein resides in the cytoplasm. The catalysed reaction is AMP + ATP = 2 ADP. It functions in the pathway purine metabolism; AMP biosynthesis via salvage pathway; AMP from ADP: step 1/1. Functionally, catalyzes the reversible transfer of the terminal phosphate group between ATP and AMP. Plays an important role in cellular energy homeostasis and in adenine nucleotide metabolism. In Bacillus velezensis (strain DSM 23117 / BGSC 10A6 / LMG 26770 / FZB42) (Bacillus amyloliquefaciens subsp. plantarum), this protein is Adenylate kinase.